The primary structure comprises 189 residues: Cytidylate kinase (189 aa).

7 to 15 (GPPGSGKTS) is an ATP binding site.

The protein belongs to the cytidylate kinase family. Type 2 subfamily.

The protein localises to the cytoplasm. It carries out the reaction CMP + ATP = CDP + ADP. It catalyses the reaction dCMP + ATP = dCDP + ADP. This is Cytidylate kinase from Saccharolobus islandicus (strain Y.N.15.51 / Yellowstone #2) (Sulfolobus islandicus).